The chain runs to 177 residues: Plasmid transfer protein TraF (177 aa).

The signal sequence occupies residues 1 to 30 (MSRFQRLTKYVAIGGGAALLLAGAAYLAGA).

This sequence belongs to the peptidase S26C family.

The protein localises to the periplasm. Functionally, required for donor-specific phage sensitivity. May be involved in pilus assembly. The polypeptide is Plasmid transfer protein TraF (traF) (Escherichia coli).